An 86-amino-acid chain; its full sequence is Large ribosomal subunit protein bL27 (86 aa).

The segment at 1–21 is disordered; that stretch reads MAHHKGGGSSRNGKDSNPQYL.

Belongs to the bacterial ribosomal protein bL27 family.

The polypeptide is Large ribosomal subunit protein bL27 (Coprothermobacter proteolyticus (strain ATCC 35245 / DSM 5265 / OCM 4 / BT)).